The sequence spans 333 residues: Protoheme IX farnesyltransferase (333 aa).

Transmembrane regions (helical) follow at residues 31 to 51 (VMSLVVFTGLTGLLAARAPIH), 52 to 72 (PVLAAIAVLCIAVGAGASGAL), 115 to 135 (MFLGFAVNWLAAGLLAFTIVF), 152 to 172 (IVIGGLAGALPPAIGWAAATG), 178 to 198 (AWLMVAIIFFWTPPHFWALSL), 223 to 243 (KQILLYSLILFPICLSPVLTG), 244 to 264 (LGGPIYLAVSGLGGLVFLLLA), and 303 to 323 (LFAFSILYLFALFAALLGEAV).

This sequence belongs to the UbiA prenyltransferase family. Protoheme IX farnesyltransferase subfamily.

It is found in the cell inner membrane. It carries out the reaction heme b + (2E,6E)-farnesyl diphosphate + H2O = Fe(II)-heme o + diphosphate. It functions in the pathway porphyrin-containing compound metabolism; heme O biosynthesis; heme O from protoheme: step 1/1. Converts heme B (protoheme IX) to heme O by substitution of the vinyl group on carbon 2 of heme B porphyrin ring with a hydroxyethyl farnesyl side group. The protein is Protoheme IX farnesyltransferase of Caulobacter vibrioides (strain ATCC 19089 / CIP 103742 / CB 15) (Caulobacter crescentus).